The chain runs to 165 residues: uncharacterized protein (165 aa).

The helical transmembrane segment at 4–26 (FVIGTMIALAGLLVGGGVGSYFT) threads the bilayer.

Its subcellular location is the membrane. This is an uncharacterized protein from Aquifex aeolicus (strain VF5).